We begin with the raw amino-acid sequence, 462 residues long: MKRDFNEFVKFIKNKKTAVVGMGISNRPLIHFLSKLGAEITAFDRKTKEELGDEVINEFSSENVKFELGENYLSALKGFDVVFKTPSMRIDSEALVKAKQEGAYITSEMEEFIKYCPAKIFGVTGSDGKTTTTTLIYNMLKEEGYKTWVGGNIGTPLFSKIKEVSTKDKVVLELSSFQLMTIDVSPEVAVVTNLSPNHLDIHKNMEEYINAKKNIFTHQSKGNVLIINRDNEITNNMESEALGDLLKFSRNEKVKNGAYYNKQDGNIYLFENKICNKDDIKIKGMDNVKNFMAAFCAVSKDVSKESMIKVAMNFAGVEHRREFVRELDGVKYYNDSIASSPTRTISGLNAYERPVILIAGGYDKHIPFEPLAEKGYDKIKVLILMGATKNKIKETFDKVICEKNIKLPIILSDNLEEAVCEAKKVATNGDIVTLSPACASFDSFPNFEVRGNKFKEIVNNLK.

Position 125–131 (125–131) interacts with ATP; sequence GSDGKTT.

Belongs to the MurCDEF family.

It is found in the cytoplasm. It carries out the reaction UDP-N-acetyl-alpha-D-muramoyl-L-alanine + D-glutamate + ATP = UDP-N-acetyl-alpha-D-muramoyl-L-alanyl-D-glutamate + ADP + phosphate + H(+). It functions in the pathway cell wall biogenesis; peptidoglycan biosynthesis. Its function is as follows. Cell wall formation. Catalyzes the addition of glutamate to the nucleotide precursor UDP-N-acetylmuramoyl-L-alanine (UMA). The protein is UDP-N-acetylmuramoylalanine--D-glutamate ligase of Clostridium acetobutylicum (strain ATCC 824 / DSM 792 / JCM 1419 / IAM 19013 / LMG 5710 / NBRC 13948 / NRRL B-527 / VKM B-1787 / 2291 / W).